We begin with the raw amino-acid sequence, 104 residues long: N(4)-acetylcytidine amidohydrolase (104 aa).

The ASCH domain maps to 7-95 (MTFFERFETD…IQDIYPGISQ (89 aa)). Lys-22 acts as the Proton acceptor in catalysis. The active-site Nucleophile is Thr-25. The active-site Proton donor is the Glu-75.

This sequence belongs to the N(4)-acetylcytidine amidohydrolase family.

It catalyses the reaction N(4)-acetylcytidine + H2O = cytidine + acetate + H(+). The enzyme catalyses N(4)-acetyl-2'-deoxycytidine + H2O = 2'-deoxycytidine + acetate + H(+). The catalysed reaction is N(4)-acetylcytosine + H2O = cytosine + acetate + H(+). Its function is as follows. Catalyzes the hydrolysis of N(4)-acetylcytidine (ac4C). The polypeptide is N(4)-acetylcytidine amidohydrolase (Vibrio atlanticus (strain LGP32) (Vibrio splendidus (strain Mel32))).